The sequence spans 264 residues: Glutamate racemase (264 aa).

Substrate is bound by residues 11-12 (DS) and 43-44 (YG). The active-site Proton donor/acceptor is the Cys74. 75–76 (NT) contributes to the substrate binding site. Cys193 acts as the Proton donor/acceptor in catalysis. Position 194–195 (194–195 (TH)) interacts with substrate.

It belongs to the aspartate/glutamate racemases family.

The catalysed reaction is L-glutamate = D-glutamate. The protein operates within cell wall biogenesis; peptidoglycan biosynthesis. In terms of biological role, provides the (R)-glutamate required for cell wall biosynthesis. This chain is Glutamate racemase, found in Bifidobacterium longum (strain DJO10A).